The chain runs to 147 residues: D-aminoacyl-tRNA deacylase (147 aa).

The short motif at 137–138 is the Gly-cisPro motif, important for rejection of L-amino acids element; the sequence is GP.

This sequence belongs to the DTD family. Homodimer.

Its subcellular location is the cytoplasm. It carries out the reaction glycyl-tRNA(Ala) + H2O = tRNA(Ala) + glycine + H(+). The enzyme catalyses a D-aminoacyl-tRNA + H2O = a tRNA + a D-alpha-amino acid + H(+). Its function is as follows. An aminoacyl-tRNA editing enzyme that deacylates mischarged D-aminoacyl-tRNAs. Also deacylates mischarged glycyl-tRNA(Ala), protecting cells against glycine mischarging by AlaRS. Acts via tRNA-based rather than protein-based catalysis; rejects L-amino acids rather than detecting D-amino acids in the active site. By recycling D-aminoacyl-tRNA to D-amino acids and free tRNA molecules, this enzyme counteracts the toxicity associated with the formation of D-aminoacyl-tRNA entities in vivo and helps enforce protein L-homochirality. The protein is D-aminoacyl-tRNA deacylase of Exiguobacterium sp. (strain ATCC BAA-1283 / AT1b).